The following is a 122-amino-acid chain: MGEMLERQKKRLPSKAKYLKYTASITETGNHEADSSVIFRPHHSDVTCSNARRAESRTLPQICSCILLDHGRRTRPEVRTGMVSLHGSFKGFPCFGIRRGISHVLPGQKLRGSCDNWKKRQN.

This is an uncharacterized protein from Saccharomyces cerevisiae (strain ATCC 204508 / S288c) (Baker's yeast).